The sequence spans 957 residues: AP2-associated protein kinase 1 (957 aa).

N-acetylmethionine is present on M1. Basic and acidic residues predominate over residues 1-11 (MKKFFDSRREQ). The tract at residues 1 to 25 (MKKFFDSRREQGGSGLGSGSSGGGG) is disordered. Residues 12 to 25 (GGSGLGSGSSGGGG) show a composition bias toward gly residues. S14 bears the Phosphoserine mark. Residues 46-315 (VTVDEVLAEG…QVSYFSFKLL (270 aa)) form the Protein kinase domain. Residues 52 to 60 (LAEGGFAIV) and K74 each bind ATP. D176 (proton acceptor) is an active-site residue. Position 234 is a phosphotyrosine (Y234). Residue S235 is modified to Phosphoserine. Disordered regions lie at residues 326 to 506 (NSPI…AVHP) and 563 to 629 (TAAA…AGHR). Phosphothreonine is present on residues T354 and T389. R391 is subject to Omega-N-methylarginine. Positions 436–448 (PQAPPTSQQPPSA) are enriched in pro residues. Position 441 is a phosphothreonine (T441). 2 stretches are compositionally biased toward low complexity: residues 449–506 (PAQA…AVHP) and 563–601 (TAAA…KVQT). Position 602 is a phosphothreonine (T602). The span at 607–617 (IQGQKLGSLTP) shows a compositional bias: polar residues. S614 is modified (phosphoserine). At T616 the chain carries Phosphothreonine. 4 positions are modified to phosphoserine: S619, S620, S633, and S646. T649 is modified (phosphothreonine). The segment at 660 to 697 (SLNKSKSATTTPSGSPRASQQNVYNPSEGSTWNPFDDD) is disordered. Polar residues predominate over residues 668–692 (TTTPSGSPRASQQNVYNPSEGSTWN). Position 683 is a phosphotyrosine (Y683). 4 positions are modified to phosphoserine: S727, S842, S933, and S934. The segment at 819-956 (EKADVAVESL…SLLLVDQLID (138 aa)) is clathrin-binding domain (CBD). Disordered stretches follow at residues 832–855 (LEPP…TDSL) and 919–941 (VLIT…ESSL). Positions 840–855 (LPSQTESVTSNRTDSL) are enriched in polar residues. The segment covering 927-940 (GGHSRNSSGSSESS) has biased composition (low complexity).

The protein belongs to the protein kinase superfamily. Ser/Thr protein kinase family. Interacts (via CBD domain) with clathrin. Interacts with AP-2 complex. Interacts with NUMB. Interacts with alpha-adaptin. Interacts with EPS15 isoform 2. Interacts with membrane-bound activated NOTCH1 but not with the inactive full-length form of NOTCH1. Preferentially interacts with monoubiquitinated activated NOTCH1 compared to the non-ubiquitinated form. In terms of processing, autophosphorylated. As to expression, detected in brain (at protein level).

It is found in the cell membrane. Its subcellular location is the membrane. It localises to the clathrin-coated pit. The protein resides in the presynapse. The catalysed reaction is L-seryl-[protein] + ATP = O-phospho-L-seryl-[protein] + ADP + H(+). It catalyses the reaction L-threonyl-[protein] + ATP = O-phospho-L-threonyl-[protein] + ADP + H(+). With respect to regulation, stimulated by clathrin. Regulates clathrin-mediated endocytosis by phosphorylating the AP2M1/mu2 subunit of the adaptor protein complex 2 (AP-2) which ensures high affinity binding of AP-2 to cargo membrane proteins during the initial stages of endocytosis. Preferentially, may phosphorylate substrates on threonine residues. Regulates phosphorylation of other AP-2 subunits as well as AP-2 localization and AP-2-mediated internalization of ligand complexes. Phosphorylates NUMB and regulates its cellular localization, promoting NUMB localization to endosomes. Binds to and stabilizes the activated form of NOTCH1, increases its localization in endosomes and regulates its transcriptional activity. This is AP2-associated protein kinase 1 (AAK1) from Bos taurus (Bovine).